Here is a 160-residue protein sequence, read N- to C-terminus: Small ribosomal subunit protein bS6 (160 aa).

A disordered region spans residues 96-160 (RKVKRFIPRA…PRTRKVSKEQ (65 aa)). Residues 126–145 (TTDASKTEASTEATASKQSE) are compositionally biased toward low complexity. The span at 151–160 (PRTRKVSKEQ) shows a compositional bias: basic residues.

This sequence belongs to the bacterial ribosomal protein bS6 family.

Functionally, binds together with bS18 to 16S ribosomal RNA. This Metamycoplasma arthritidis (strain 158L3-1) (Mycoplasma arthritidis) protein is Small ribosomal subunit protein bS6.